A 648-amino-acid chain; its full sequence is Serine/threonine-protein kinase PrkC (648 aa).

Residues 1-330 (MLIGKRISGR…KKNGKRKKWP (330 aa)) lie on the Cytoplasmic side of the membrane. One can recognise a Protein kinase domain in the interval 11–271 (YQILRVIGGG…DMEADIKTAF (261 aa)). ATP is bound by residues 17–25 (IGGGGMANV) and K40. The Proton acceptor role is filled by D134. Phosphothreonine; by autocatalysis is present on residues T162, T163, T165, and T167. Phosphoserine; by autocatalysis is present on S214. Phosphothreonine; by autocatalysis occurs at positions 290, 313, and 320. A helical membrane pass occupies residues 331-351 (WVLLTICLVFITAGILAVTVF). The Extracellular portion of the chain corresponds to 352 to 648 (PSLFMPKDVK…YKTIEYPKDE (297 aa)). PASTA domains are found at residues 356 to 424 (MPKD…YKST), 425 to 492 (GKAK…TVSI), and 493 to 559 (GPED…TFSL).

Belongs to the protein kinase superfamily. Ser/Thr protein kinase family. In terms of assembly, homodimer. Autophosphorylation on threonine residue(s) and serine residue considerably increases the kinase activity of the protein. Dephosphorylated in vitro by PrpC.

It is found in the spore membrane. The enzyme catalyses L-seryl-[protein] + ATP = O-phospho-L-seryl-[protein] + ADP + H(+). The catalysed reaction is L-threonyl-[protein] + ATP = O-phospho-L-threonyl-[protein] + ADP + H(+). Bryostatin activates PrkC activity and induces germination, whereas staurosporine inhibits PrkC and significantly reduced peptidoglycan-dependent germination. Kinase activity of isolated N-terminus stimulated by poly-L-lysine or myelin basic protein. In terms of biological role, protein kinase that is responsible for triggering spore germination in response to muropeptides, signaling bacteria to exit dormancy. PrkC is thus a germination receptor that binds peptidoglycan fragments containing m-Dpm (meso-diaminopimelate), which act as spore germinants. Autophosphorylates and phosphorylates EF-G (elongation factor G, fusA); the latter modification is likely necessary for germination in response to peptidoglycan. Another group did not detect phosphorylation of EF-G. PrkC is a substrate in vitro of the cotranscribed phosphatase PrpC, which suggests that they form a functional couple in vivo. Might also be involved in sporulation and biofilm formation. Does not seem to be involved in stress response. In Bacillus subtilis (strain 168), this protein is Serine/threonine-protein kinase PrkC (prkC).